Consider the following 606-residue polypeptide: MGVVIPEHKIQEVLERVDLVGLISRHVDLKKAGREWKACCPFHQEKTPSFYVVPEKRFYFCHGCRASGDAVSFVQRYLGKTFLDAVRDLARELGVDLEAEQDPSMRERQQIKEATDQAAEHFRAMLWQQDEGRSARAYIASRGVSDETAMAFGLGWAPLEWASLTERFQKLGMLEWAAKAGLVLKRNSGDGYYDFFRSRVMVPIRAPEGRPIAFGGRLIGADEGPKYLNSRESRLYNKSETLFGMDQSRDEIRKRKAAVLVEGYFDALGLHQVGVRHAVALCSTNLTAGHMQVLKRAEARELILLLDGDSAGLAAVERLSGPLLAAGATARVALLPQGDDPDTFARREGQEGVERLLEGAHPLTSHLFASLLPEGKAASFEEKMAALERLKPVVGQVPVGLVRATLFSAVAEHFGWRPADVEAALRSKVPLPKPAGGDAPPSSPNRPAPPLEKPPPALECFYVGAVLKEPRLMARDTFRVCDELSHMGLRMALAHATSGHGANDALFESSEAVKRGIESALRQLPSEPVPLEAAFLSICREIMVRRIDERLVYIKRATEQTPGAFDLTEETRQLLVERVELLALKKRVLEELKPASSGTKAPMQPV.

Residues 40–64 form a CHC2-type zinc finger; sequence CPFHQEKTPSFYVVPEKRFYFCHGC. The region spanning 256-349 is the Toprim domain; sequence KAAVLVEGYF…DPDTFARREG (94 aa). Mg(2+) contacts are provided by E262, D307, and D309. A disordered region spans residues 429 to 451; sequence VPLPKPAGGDAPPSSPNRPAPPL. A compositionally biased stretch (pro residues) spans 441-451; that stretch reads PSSPNRPAPPL.

Belongs to the DnaG primase family. As to quaternary structure, monomer. Interacts with DnaB. Zn(2+) serves as cofactor. It depends on Mg(2+) as a cofactor.

It catalyses the reaction ssDNA + n NTP = ssDNA/pppN(pN)n-1 hybrid + (n-1) diphosphate.. Its function is as follows. RNA polymerase that catalyzes the synthesis of short RNA molecules used as primers for DNA polymerase during DNA replication. The protein is DNA primase of Myxococcus xanthus.